A 187-amino-acid polypeptide reads, in one-letter code: MATGKEILNDAKQKMAKSGYALQRTLADIRAGQANASLLNSVKVEYYGAPTPLNQVASITIPEARQLLITPYDESVLEEIEKAIYASNLGLTPQNDGSSIRLIIPQLTEDRRKELVKDVKAELEKAKVAVRNVRREAMDDLKKGNKNGDFNDDEFHDLEKKVQNETDAGIKNLEDIANAKEKELMEG.

Positions 141-169 are disordered; it reads LKKGNKNGDFNDDEFHDLEKKVQNETDAG.

Belongs to the RRF family.

The protein resides in the cytoplasm. In terms of biological role, responsible for the release of ribosomes from messenger RNA at the termination of protein biosynthesis. May increase the efficiency of translation by recycling ribosomes from one round of translation to another. This Limosilactobacillus reuteri (strain DSM 20016) (Lactobacillus reuteri) protein is Ribosome-recycling factor.